The sequence spans 123 residues: Preprofallaxidin-3 (123 aa).

A signal peptide spans 1 to 22; the sequence is MASLKKSLFLVLFLGLVSLSIC. A propeptide spanning residues 23–46 is cleaved from the precursor; sequence EEKKRENEDDAEDENHEEESEEKR. Residues 26–46 are disordered; the sequence is KRENEDDAEDENHEEESEEKR. The span at 30 to 42 shows a compositional bias: acidic residues; sequence EDDAEDENHEEES. Leu-62 bears the Leucine amide mark. A propeptide spanning residues 66-70 is cleaved from the precursor; it reads SEEKR. Phenylalanine amide is present on Phe-74. A propeptide spanning residues 78–82 is cleaved from the precursor; it reads SEEKR. A Phenylalanine amide modification is found at Phe-88. A propeptide spanning residues 92-96 is cleaved from the precursor; sequence SEEKR. Ile-102 carries the isoleucine amide modification. Residues 106-110 constitute a propeptide that is removed on maturation; that stretch reads SEEKR. Ile-116 is modified (isoleucine amide). Residues 120–123 constitute a propeptide that is removed on maturation; it reads KKKK.

Belongs to the frog skin active peptide (FSAP) family. Brevinin subfamily. In terms of tissue distribution, expressed by the skin glands.

The protein localises to the secreted. Fallaxidin-1.1 shows no antibacterial activity against Gram-positive or Gram-negative bacteria. Does not inhibit the formation of NO by neuronal nitric oxide synthase. Has no effect on splenocyte proliferation or smooth muscle contraction. Functionally, fallaxidin-1.2 shows no antibacterial activity against Gram-positive or Gram-negative bacteria. Does not inhibit the formation of NO by neuronal nitric oxide synthase. Has no effect on splenocyte proliferation or smooth muscle contraction. In terms of biological role, fallaxidin-1.3 shows no antibacterial activity against Gram-positive or Gram-negative bacteria. Does not inhibit the formation of NO by neuronal nitric oxide synthase. Has no effect on splenocyte proliferation or smooth muscle contraction. Its function is as follows. Fallaxidin-3.2 shows antibacterial activity against the Gram-positive bacteria E.faecalis (MIC=100 uM) and L.lactis (MIC=500 uM). No antibacterial activity against the Gram-positive bacteria B.cereus, L.innocua, M.luteus, S.epidermidis, S.uberis and S.aureus, or the Gram-negative bacteria E.cloacae and E.coli. The protein is Preprofallaxidin-3 of Litoria fallax (Eastern dwarf tree frog).